Reading from the N-terminus, the 487-residue chain is Transmembrane protein 161B (487 aa).

N-linked (GlcNAc...) asparagine glycosylation is present at Asn-34. Residues 107–127 (LVDFTVAATVVYLVTEVYYNF) form a helical membrane-spanning segment. N-linked (GlcNAc...) asparagine glycosylation is present at Asn-135. A run of 2 helical transmembrane segments spans residues 136–156 (ISLVWCLLVLSFAIKVLFSLT) and 169–189 (SVCVTFGFFFFVKAMAVLIVT). N-linked (GlcNAc...) asparagine glycosylation occurs at Asn-203. 5 helical membrane passes run 228 to 248 (FKFFLAIFCSFIGAFLTFPGL), 265 to 285 (ITQTLLHINFLAPLFMVLLWV), 305 to 325 (LMTEATFDTLRLWLIILLCAL), 367 to 387 (VFYYLCVIALQYVAPLVMLLH), and 459 to 479 (LSFLTWWIAACLFSTSLFGLF).

It belongs to the TMEM161 family.

The protein localises to the cell membrane. Functionally, essential for maintaining normal cardiac rhythm in the developing heart and for neonatal survival. Inhibits potassium and calcium currents in the cardiomyocytes, this assists in timely action potential repolarization and thereby maintains normal cardiac rhythm. The sequence is that of Transmembrane protein 161B (TMEM161B) from Homo sapiens (Human).